Here is a 2359-residue protein sequence, read N- to C-terminus: Pre-mRNA-processing-splicing factor 8A (2359 aa).

The disordered stretch occupies residues 1–54 (MWNNNDGMPLAPPGTGGSMMPPPPAAHPSYTALPPPSNPTPPVEPTPEEAEAKL). A compositionally biased stretch (pro residues) spans 33–45 (LPPPSNPTPPVEP). The region spanning 2127 to 2258 (TYIMPKNILK…LTSYKLTQTG (132 aa)) is the MPN domain.

As to quaternary structure, interacts with CLO.

Its subcellular location is the nucleus. In terms of biological role, functions as a scaffold that mediates the ordered assembly of spliceosomal proteins and snRNAs. Required for the assembly of the U4/U6-U5 tri-snRNP complex. Required for embryo development. Required for splicing efficiency of COOLAIR introns and usage of the proximal poly(A) site. COOLAIR is a set of long non-coding antisense transcripts produced at the FLOWERING LOCUS C (FLC). COOLAIR initiates just downstream of the major sense transcript poly(A) site and terminates either early or extends into the FLC promoter region. Splicing of COOLAIR by PRP8A is functionally important for FLC regulation. The protein is Pre-mRNA-processing-splicing factor 8A of Arabidopsis thaliana (Mouse-ear cress).